A 380-amino-acid chain; its full sequence is 8-amino-7-oxononanoate synthase (380 aa).

Arginine 26 contributes to the substrate binding site. 104–105 (GY) provides a ligand contact to pyridoxal 5'-phosphate. A substrate-binding site is contributed by histidine 129. Pyridoxal 5'-phosphate-binding positions include serine 175, 200–203 (DEAH), and 232–235 (TLSK). Lysine 235 carries the N6-(pyridoxal phosphate)lysine modification. Position 345 (threonine 345) interacts with substrate.

The protein belongs to the class-II pyridoxal-phosphate-dependent aminotransferase family. BioF subfamily. In terms of assembly, homodimer. Pyridoxal 5'-phosphate is required as a cofactor.

It catalyses the reaction 6-carboxyhexanoyl-[ACP] + L-alanine + H(+) = (8S)-8-amino-7-oxononanoate + holo-[ACP] + CO2. The protein operates within cofactor biosynthesis; biotin biosynthesis. Functionally, catalyzes the decarboxylative condensation of pimeloyl-[acyl-carrier protein] and L-alanine to produce 8-amino-7-oxononanoate (AON), [acyl-carrier protein], and carbon dioxide. The polypeptide is 8-amino-7-oxononanoate synthase (Mycolicibacterium vanbaalenii (strain DSM 7251 / JCM 13017 / BCRC 16820 / KCTC 9966 / NRRL B-24157 / PYR-1) (Mycobacterium vanbaalenii)).